The following is a 439-amino-acid chain: Histidinol dehydrogenase (439 aa).

Residues tyrosine 129, glutamine 193, and asparagine 222 each coordinate NAD(+). Threonine 245, glutamine 267, and histidine 270 together coordinate substrate. Zn(2+) is bound by residues glutamine 267 and histidine 270. Active-site proton acceptor residues include glutamate 336 and histidine 337. Histidine 337, aspartate 370, glutamate 424, and histidine 429 together coordinate substrate. Residue aspartate 370 participates in Zn(2+) binding. Histidine 429 is a Zn(2+) binding site.

It belongs to the histidinol dehydrogenase family. Zn(2+) serves as cofactor.

It catalyses the reaction L-histidinol + 2 NAD(+) + H2O = L-histidine + 2 NADH + 3 H(+). Its pathway is amino-acid biosynthesis; L-histidine biosynthesis; L-histidine from 5-phospho-alpha-D-ribose 1-diphosphate: step 9/9. Catalyzes the sequential NAD-dependent oxidations of L-histidinol to L-histidinaldehyde and then to L-histidine. The polypeptide is Histidinol dehydrogenase (Cutibacterium acnes (strain DSM 16379 / KPA171202) (Propionibacterium acnes)).